A 218-amino-acid chain; its full sequence is N-(5'-phosphoribosyl)anthranilate isomerase (218 aa).

Belongs to the TrpF family.

It carries out the reaction N-(5-phospho-beta-D-ribosyl)anthranilate = 1-(2-carboxyphenylamino)-1-deoxy-D-ribulose 5-phosphate. The protein operates within amino-acid biosynthesis; L-tryptophan biosynthesis; L-tryptophan from chorismate: step 3/5. The polypeptide is N-(5'-phosphoribosyl)anthranilate isomerase (Stenotrophomonas maltophilia (strain R551-3)).